Consider the following 416-residue polypeptide: STAM-binding protein-like (416 aa).

Residues 214-244 are disordered; the sequence is SYGTVQPHPPAVDRSLKPSSYGSNSSGVTSD. The span at 230–243 shows a compositional bias: low complexity; that stretch reads KPSSYGSNSSGVTS. Residues 249-380 enclose the MPN domain; that stretch reads VKIPRDVCCK…LTDYGMKEIG (132 aa). Zn(2+) is bound by residues His327, His329, Asp340, His342, Cys382, His388, and His390. The JAMM motif signature appears at 327-340; it reads HTHPTQTAFLSSVD.

Belongs to the peptidase M67C family. It depends on Zn(2+) as a cofactor.

Zinc metalloprotease that specifically cleaves 'Lys-63'-linked polyubiquitin chains. Does not cleave 'Lys-48'-linked polyubiquitin chains. Functions at the endosome and is able to oppose the ubiquitin-dependent sorting of receptors to lysosomes. The sequence is that of STAM-binding protein-like (stambp) from Xenopus laevis (African clawed frog).